We begin with the raw amino-acid sequence, 393 residues long: Homogentisate phytyltransferase 1, chloroplastic (393 aa).

The N-terminal 36 residues, Met-1–Arg-36, are a transit peptide targeting the chloroplast. The next 9 helical transmembrane spans lie at Thr-108–Ser-128, Leu-133–Val-153, Tyr-170–Phe-190, Pro-205–Leu-227, Phe-232–Phe-252, Leu-271–Ile-291, Val-314–Ala-334, Phe-338–Ala-358, and Ile-371–Phe-391.

This sequence belongs to the UbiA prenyltransferase family.

It localises to the plastid. The protein resides in the chloroplast membrane. The enzyme catalyses phytyl diphosphate + homogentisate + H(+) = 2-methyl-6-phytyl-1,4-benzene-1,4-diol + CO2 + diphosphate. It participates in cofactor biosynthesis; tocopherol biosynthesis. Functionally, involved in the synthesis of tocopherol (vitamin E). Catalyzes the condensation of homogentisate and phytyl diphosphate to form dimethylphytylhydrquinone. Low activity with geranylgeranyl diphosphate as substrate, but no activity with farnesyl diphosphate or solanesyl diphosphate. Tocopherol functions to limit lipid oxidation during seed desiccation, quiescence and germination and early seedling development. Protects thylakoid membrane lipids from photooxidation and is required for low-temperature adaptation. This chain is Homogentisate phytyltransferase 1, chloroplastic (HPT1), found in Arabidopsis thaliana (Mouse-ear cress).